We begin with the raw amino-acid sequence, 546 residues long: Serine/threonine-protein kinase Chk2 (546 aa).

Positions 1–70 (MKSHHQSHSS…SSHSSSGTLS (70 aa)) are disordered. Residues 8–70 (HSSTSSKAHD…SSHSSSGTLS (63 aa)) are compositionally biased toward low complexity. Position 68 is a phosphothreonine; by MAP3K20 (Thr-68). The residue at position 71 (Ser-71) is a Phosphoserine; by PLK3. Residue Thr-77 is modified to Phosphothreonine; by ATM and MAP3K20. Phosphoserine; by PLK3 is present on Ser-82. The 63-residue stretch at 117-179 (YWFGRDKSCE…NGTFVNTELI (63 aa)) folds into the FHA domain. A Protein kinase domain is found at 224–490 (YIMSKTLGSG…TEEALNHPWL (267 aa)). ATP contacts are provided by residues 231-238 (GSGACGEV), Lys-253, and 306-312 (ELMEGGE). Asp-351 serves as the catalytic Proton acceptor. ATP contacts are provided by residues 355 to 356 (EN) and Asp-372. The segment at 372–398 (DFGQSKILGETSLMRTLCGTPTYLAPE) is T-loop/activation segment. A Phosphoserine; by autocatalysis modification is found at Ser-383. Phosphothreonine; by autocatalysis occurs at positions 387 and 391. Ser-460 bears the Phosphoserine mark.

It belongs to the protein kinase superfamily. CAMK Ser/Thr protein kinase family. CHK2 subfamily. In terms of assembly, homodimer. Homodimerization is part of the activation process but the dimer may dissociate following activation. Interacts with PML. Interacts with TP53. Interacts with RB1; phosphorylates RB1. Interacts with BRCA1. Interacts (phosphorylated at Thr-68) with MDC1; requires ATM-mediated phosphorylation of CHEK2. Interacts with TP53BP1; modulates CHEK2 phosphorylation at Thr-68 in response to ionizing radiation. Interacts with CDC25A; phosphorylates CDC25A and mediates its degradation in response to ionizing radiation. Interacts with CUL1; mediates CHEK2 ubiquitination and regulation. Interacts with CDKN2AIP. Interacts (via protein kinase domain) with CCAR2 (via N-terminus). Interacts with SIRT1. Mg(2+) serves as cofactor. Post-translationally, phosphorylated. Phosphorylated at Ser-82 by PLK3 in response to DNA damage, promoting phosphorylation at Thr-77 by ATM and the G2/M transition checkpoint. Phosphorylation at Thr-77 induces homodimerization. Autophosphorylates at Thr-387 and Thr-391 in the T-loop/activation segment upon dimerization to become fully active. DNA damage-induced autophosphorylation at Ser-383 induces CUL1-mediated ubiquitination and regulates the pro-apoptotic function. Phosphorylation at Ser-460 also regulates ubiquitination. Phosphorylated by PLK4. Ubiquitinated. CUL1-mediated ubiquitination regulates the pro-apoptotic function. Ubiquitination may also regulate protein stability. Ubiquitinated by RNF8 via 'Lys-48'-linked ubiquitination. Ubiquitously expressed with higher levels in the thymus, spleen and colon (at protein level).

It localises to the nucleus. It is found in the PML body. The protein localises to the nucleoplasm. The catalysed reaction is L-seryl-[protein] + ATP = O-phospho-L-seryl-[protein] + ADP + H(+). The enzyme catalyses L-threonyl-[protein] + ATP = O-phospho-L-threonyl-[protein] + ADP + H(+). With respect to regulation, activated through phosphorylation at Thr-68 by ATM in response to DNA double-strand breaks. Activation is modulated by several mediators including MDC1 and TP53BP1. Induces homodimerization with exchange of the T-loop/activation segment between protomers and transphosphorylation of the protomers. The autophosphorylated kinase dimer is fully active. Negatively regulated by PPM1D through dephosphorylation of Thr-68. Its function is as follows. Serine/threonine-protein kinase which is required for checkpoint-mediated cell cycle arrest, activation of DNA repair and apoptosis in response to the presence of DNA double-strand breaks. May also negatively regulate cell cycle progression during unperturbed cell cycles. Following activation, phosphorylates numerous effectors preferentially at the consensus sequence [L-X-R-X-X-S/T]. Regulates cell cycle checkpoint arrest through phosphorylation of CDC25A, CDC25B and CDC25C, inhibiting their activity. Inhibition of CDC25 phosphatase activity leads to increased inhibitory tyrosine phosphorylation of CDK-cyclin complexes and blocks cell cycle progression. May also phosphorylate NEK6 which is involved in G2/M cell cycle arrest. Regulates DNA repair through phosphorylation of BRCA2, enhancing the association of RAD51 with chromatin which promotes DNA repair by homologous recombination. Also stimulates the transcription of genes involved in DNA repair (including BRCA2) through the phosphorylation and activation of the transcription factor FOXM1. Regulates apoptosis through the phosphorylation of p53/TP53, MDM4 and PML. Phosphorylation of p53/TP53 at 'Ser-20' by CHEK2 may alleviate inhibition by MDM2, leading to accumulation of active p53/TP53. Phosphorylation of MDM4 may also reduce degradation of p53/TP53. Also controls the transcription of pro-apoptotic genes through phosphorylation of the transcription factor E2F1. Tumor suppressor, it may also have a DNA damage-independent function in mitotic spindle assembly by phosphorylating BRCA1. Its absence may be a cause of the chromosomal instability observed in some cancer cells. Promotes the CCAR2-SIRT1 association and is required for CCAR2-mediated SIRT1 inhibition. Under oxidative stress, promotes ATG7 ubiquitination by phosphorylating the E3 ubiquitin ligase TRIM32 at 'Ser-56' leading to positive regulation of the autophagosme assembly. In Mus musculus (Mouse), this protein is Serine/threonine-protein kinase Chk2.